Consider the following 284-residue polypeptide: Bifunctional protein FolD (284 aa).

NADP(+)-binding positions include 164-166 (GTS) and I230.

This sequence belongs to the tetrahydrofolate dehydrogenase/cyclohydrolase family. In terms of assembly, homodimer.

The enzyme catalyses (6R)-5,10-methylene-5,6,7,8-tetrahydrofolate + NADP(+) = (6R)-5,10-methenyltetrahydrofolate + NADPH. It catalyses the reaction (6R)-5,10-methenyltetrahydrofolate + H2O = (6R)-10-formyltetrahydrofolate + H(+). It participates in one-carbon metabolism; tetrahydrofolate interconversion. In terms of biological role, catalyzes the oxidation of 5,10-methylenetetrahydrofolate to 5,10-methenyltetrahydrofolate and then the hydrolysis of 5,10-methenyltetrahydrofolate to 10-formyltetrahydrofolate. The polypeptide is Bifunctional protein FolD (Mycoplasma capricolum subsp. capricolum (strain California kid / ATCC 27343 / NCTC 10154)).